The chain runs to 478 residues: Aspartyl/glutamyl-tRNA(Asn/Gln) amidotransferase subunit B (478 aa).

The protein belongs to the GatB/GatE family. GatB subfamily. As to quaternary structure, heterotrimer of A, B and C subunits.

It carries out the reaction L-glutamyl-tRNA(Gln) + L-glutamine + ATP + H2O = L-glutaminyl-tRNA(Gln) + L-glutamate + ADP + phosphate + H(+). The enzyme catalyses L-aspartyl-tRNA(Asn) + L-glutamine + ATP + H2O = L-asparaginyl-tRNA(Asn) + L-glutamate + ADP + phosphate + 2 H(+). In terms of biological role, allows the formation of correctly charged Asn-tRNA(Asn) or Gln-tRNA(Gln) through the transamidation of misacylated Asp-tRNA(Asn) or Glu-tRNA(Gln) in organisms which lack either or both of asparaginyl-tRNA or glutaminyl-tRNA synthetases. The reaction takes place in the presence of glutamine and ATP through an activated phospho-Asp-tRNA(Asn) or phospho-Glu-tRNA(Gln). In Alkalilimnicola ehrlichii (strain ATCC BAA-1101 / DSM 17681 / MLHE-1), this protein is Aspartyl/glutamyl-tRNA(Asn/Gln) amidotransferase subunit B.